A 520-amino-acid polypeptide reads, in one-letter code: Amine oxidase [flavin-containing] B (520 aa).

N-acetylserine is present on Ser2. The Cytoplasmic segment spans residues 2 to 489 (SNKCDVVVVG…TFLERHLPSV (488 aa)). Lys52 carries the post-translational modification N6-acetyllysine. Cys397 bears the S-8alpha-FAD cysteine mark. Residues 490–516 (PGLLRLIGLTTIFSATALGFLAHKRGL) form a helical; Anchor for type IV membrane protein membrane-spanning segment. Over 517 to 520 (LVRV) the chain is Mitochondrial intermembrane.

Monomer, homo- or heterodimer (containing two subunits of similar size). Each subunit contains a covalently bound flavin. Enzymatically active as monomer. It depends on FAD as a cofactor.

Its subcellular location is the mitochondrion outer membrane. The catalysed reaction is a secondary aliphatic amine + O2 + H2O = a primary amine + an aldehyde + H2O2. The enzyme catalyses (R)-adrenaline + O2 + H2O = (R)-3,4-dihydroxymandelaldehyde + methylamine + H2O2. It catalyses the reaction a primary methyl amine + O2 + H2O = an aldehyde + H2O2 + NH4(+). It carries out the reaction benzylamine + O2 + H2O = benzaldehyde + H2O2 + NH4(+). The catalysed reaction is dopamine + O2 + H2O = 3,4-dihydroxyphenylacetaldehyde + H2O2 + NH4(+). The enzyme catalyses tyramine + O2 + H2O = (4-hydroxyphenyl)acetaldehyde + H2O2 + NH4(+). It catalyses the reaction (R)-noradrenaline + O2 + H2O = (R)-3,4-dihydroxymandelaldehyde + H2O2 + NH4(+). It carries out the reaction 2-phenylethylamine + O2 + H2O = 2-phenylacetaldehyde + H2O2 + NH4(+). The catalysed reaction is N-acetylputrescine + O2 + H2O = 4-acetamidobutanal + H2O2 + NH4(+). With respect to regulation, inhibited by deprenyl. In terms of biological role, catalyzes the oxidative deamination of primary and some secondary amines such as neurotransmitters, and exogenous amines including the tertiary amine, neurotoxin 1-methyl-4-phenyl-1,2,3,6-tetrahydropyridine (MPTP), with concomitant reduction of oxygen to hydrogen peroxide and participates in the metabolism of neuroactive and vasoactive amines in the central nervous system and peripheral tissues. Preferentially degrades benzylamine and phenylethylamine. The polypeptide is Amine oxidase [flavin-containing] B (Homo sapiens (Human)).